Consider the following 2635-residue polypeptide: Protein unc-79 homolog (2635 aa).

2 positions are modified to phosphoserine: Ser-754 and Ser-758. Disordered regions lie at residues Gly-907–Glu-929, Ile-1538–Arg-1575, Leu-1607–Ser-1678, Ser-1693–Gln-1832, Leu-1863–Arg-1909, and Leu-1929–Gly-1950. The span at Ser-1666–Ser-1678 shows a compositional bias: low complexity. Residues Lys-1699 to Ala-1713 show a composition bias toward polar residues. A compositionally biased stretch (basic and acidic residues) spans Leu-1761–Gly-1775. Polar residues-rich tracts occupy residues Glu-1897–Arg-1909 and Leu-1929–Ile-1947. 2 helical membrane passes run Leu-2223–Gly-2243 and Val-2466–Cys-2486.

This sequence belongs to the unc-79 family. As to quaternary structure, NALCN complex consists of NALCN and auxiliary subunits, UNC79, UNC80 and NACL1. These auxiliary subunits are essential for the NALCN channel function. UNC80 bridges NALCN to UNC79.

The protein resides in the cell membrane. Its function is as follows. Auxiliary subunit of the NALCN sodium channel complex, a voltage-gated ion channel responsible for the resting Na(+) permeability that controls neuronal excitability. Activated by neuropeptides substance P, neurotensin, and extracellular calcium that regulates neuronal excitability by controlling the sizes of NALCN-dependent sodium-leak current. The sequence is that of Protein unc-79 homolog (UNC79) from Homo sapiens (Human).